An 83-amino-acid chain; its full sequence is Small ribosomal subunit protein bS16c (83 aa).

It belongs to the bacterial ribosomal protein bS16 family.

Its subcellular location is the plastid. It localises to the chloroplast. The protein is Small ribosomal subunit protein bS16c of Chaetosphaeridium globosum (Charophycean green alga).